The chain runs to 162 residues: NADH-quinone oxidoreductase subunit I (162 aa).

4Fe-4S ferredoxin-type domains lie at 52-82 (LRRY…IEAG) and 93-122 (TRYD…EGPN). [4Fe-4S] cluster-binding residues include Cys62, Cys65, Cys68, Cys72, Cys102, Cys105, Cys108, and Cys112.

Belongs to the complex I 23 kDa subunit family. As to quaternary structure, NDH-1 is composed of 14 different subunits. Subunits NuoA, H, J, K, L, M, N constitute the membrane sector of the complex. Requires [4Fe-4S] cluster as cofactor.

Its subcellular location is the cell inner membrane. It catalyses the reaction a quinone + NADH + 5 H(+)(in) = a quinol + NAD(+) + 4 H(+)(out). In terms of biological role, NDH-1 shuttles electrons from NADH, via FMN and iron-sulfur (Fe-S) centers, to quinones in the respiratory chain. The immediate electron acceptor for the enzyme in this species is believed to be ubiquinone. Couples the redox reaction to proton translocation (for every two electrons transferred, four hydrogen ions are translocated across the cytoplasmic membrane), and thus conserves the redox energy in a proton gradient. The protein is NADH-quinone oxidoreductase subunit I of Azorhizobium caulinodans (strain ATCC 43989 / DSM 5975 / JCM 20966 / LMG 6465 / NBRC 14845 / NCIMB 13405 / ORS 571).